The following is a 484-amino-acid chain: Glutamate--tRNA ligase (484 aa).

The 'HIGH' region motif lies at Pro11–Asn21. The short motif at Lys255–Arg259 is the 'KMSKS' region element. ATP is bound at residue Lys258.

It belongs to the class-I aminoacyl-tRNA synthetase family. Glutamate--tRNA ligase type 1 subfamily. In terms of assembly, monomer.

The protein resides in the cytoplasm. The enzyme catalyses tRNA(Glu) + L-glutamate + ATP = L-glutamyl-tRNA(Glu) + AMP + diphosphate. In terms of biological role, catalyzes the attachment of glutamate to tRNA(Glu) in a two-step reaction: glutamate is first activated by ATP to form Glu-AMP and then transferred to the acceptor end of tRNA(Glu). The chain is Glutamate--tRNA ligase from Streptococcus suis (strain 98HAH33).